The following is a 354-amino-acid chain: Dihydroflavonol 4-reductase (354 aa).

The NADP(+) site is built by K44 and Y163.

This sequence belongs to the NAD(P)-dependent epimerase/dehydratase family. Dihydroflavonol-4-reductase subfamily.

It carries out the reaction a (2R,3S,4S)-leucoanthocyanidin + NADP(+) = a (2R,3R)-dihydroflavonol + NADPH + H(+). The catalysed reaction is (2S)-flavan-4-ol + NADP(+) = (2S)-flavanone + NADPH + H(+). It functions in the pathway pigment biosynthesis; anthocyanin biosynthesis. In terms of biological role, bifunctional enzyme involved in flavonoid metabolism. The protein is Dihydroflavonol 4-reductase (ANT18) of Hordeum vulgare (Barley).